The chain runs to 104 residues: MIFTLLGLALVATKSACIAHVFILQLGALDMEALATPLAKVIATSARALHTRSLRASERDKCTNLTARSTRALLAHGPRLRHAVQQQAVAALFTIAVARRRRTA.

The first 19 residues, 1–19, serve as a signal peptide directing secretion; it reads MIFTLLGLALVATKSACIA. Positions 52–55 match the RxLR motif; the sequence is RSLR. N64 carries an N-linked (GlcNAc...) asparagine glycan.

The protein belongs to the RxLR effector family.

The protein resides in the secreted. Its subcellular location is the host chloroplast envelope. It is found in the host mitochondrion. It localises to the host nucleus. The protein localises to the host cytoplasm. Functionally, secreted effector that completely suppresses the host cell death induced by cell death-inducing proteins. The protein is Secreted RxLR effector protein 54 of Plasmopara viticola (Downy mildew of grapevine).